Here is a 517-residue protein sequence, read N- to C-terminus: Protein ERGIC-53 (517 aa).

Positions 1–30 (MAVSRRRGPQAGAQSFFCALLLSFSQFVGS) are cleaved as a signal peptide. Topologically, residues 31–484 (DGMGGDAAAP…DLPAFPSCLS (454 aa)) are lumenal. Residues 52-275 (RRFEYKYSFK…DVLSFLTFQL (224 aa)) form the L-type lectin-like domain. A carbohydrate-binding residues include Ser96 and Asp129. Residues Asp160, Phe162, Asp163, Asn164, Asp165, Asn169, and Asn170 each contribute to the Ca(2+) site. Position 164 (Asn164) interacts with a carbohydrate. His186 provides a ligand contact to a carbohydrate. Asp189 is a Ca(2+) binding site. Cys198 and Cys238 are oxidised to a cystine. Position 259-261 (259-261 (GGL)) interacts with a carbohydrate. Disordered stretches follow at residues 276-297 (TEPG…KEKY) and 377-396 (EISR…SQQE). Residues 278–297 (PGKEPPTPEKDISEKEKEKY) show a composition bias toward basic and acidic residues. Ser433 is subject to Phosphoserine. A helical membrane pass occupies residues 485–505 (TVHFVIFIVVQTVLFIGYIMY). Residues 506-517 (RTQQEAAAKKFF) are Cytoplasmic-facing. The mediates interaction with RAB3GAP1, RAB3GAP2 and UBXN6 stretch occupies residues 506–517 (RTQQEAAAKKFF). Positions 516–517 (FF) match the ER export motif motif.

As to quaternary structure, exists both as a covalent disulfide-linked homohexamer, and a complex of three disulfide-linked dimers non-covalently kept together. Interacts with MCFD2. May interact with TMEM115. Interacts with RAB3GAP1 and RAB3GAP2. Interacts with UBXN6. Interacts with SERPINA1/alpha1-antitrypsin. Interacts with BET1.

The protein resides in the endoplasmic reticulum-Golgi intermediate compartment membrane. Its subcellular location is the golgi apparatus membrane. It is found in the endoplasmic reticulum membrane. In terms of biological role, mannose-specific lectin. May recognize sugar residues of glycoproteins, glycolipids, or glycosylphosphatidyl inositol anchors and may be involved in the sorting or recycling of proteins, lipids, or both. The LMAN1-MCFD2 complex forms a specific cargo receptor for the ER-to-Golgi transport of selected proteins. This is Protein ERGIC-53 (Lman1) from Rattus norvegicus (Rat).